We begin with the raw amino-acid sequence, 492 residues long: Putative sucrose transport protein SUC6 (492 aa).

The segment at 1-26 is disordered; the sequence is MSDLQANKDAAAVNRQSSSSSADLNG. The Cytoplasmic segment spans residues 1–33; sequence MSDLQANKDAAAVNRQSSSSSADLNGPSPMRKM. Positions 14-23 are enriched in polar residues; it reads NRQSSSSSAD. At serine 17 the chain carries Phosphoserine. Residues 34-54 traverse the membrane as a helical segment; it reads ISVASIAAGIQFGWALQLSLL. Residues 55 to 68 are Extracellular-facing; that stretch reads TPYVQLLGVPHKWS. Residues 69-89 form a helical membrane-spanning segment; it reads SFIWLCGPVSGLLVQPSVGYF. At 90–101 the chain is on the cytoplasmic side; sequence SDRCKSRFGRRR. A helical membrane pass occupies residues 102 to 122; it reads PFIAMGALLVAVAVVLIGYAA. Over 123-139 the chain is Extracellular; sequence DFGHSMGDKVDEPVKMR. Residues 140-160 form a helical membrane-spanning segment; sequence AVVIFALGFWILDVANNTLQG. Residues 161–181 lie on the Cytoplasmic side of the membrane; the sequence is PCRAFLGDLAAGDAKKTRTAN. The chain crosses the membrane as a helical span at residues 182 to 202; it reads AFFSFFMAVGNVLGYAAGSYT. Over 203-224 the chain is Extracellular; it reads NLYKIFPFTMTKACDIYCANLK. Residues 225 to 245 traverse the membrane as a helical segment; it reads SCFFLSITLLLVVTIIALWYV. The Cytoplasmic segment spans residues 246–277; that stretch reads EDKQWSPKADSDNEKTPFFGEIFGAFKVMKRP. A helical membrane pass occupies residues 278 to 298; it reads MWMLLIVTALNWIAWFPFLLY. The Extracellular portion of the chain corresponds to 299–324; the sequence is DTDWMGREVYGGDSKGDDKMKKLYNQ. Residues 325–345 form a helical membrane-spanning segment; sequence GIHVGGLGLMLNSIVLGFMSL. Residues 346-359 are Cytoplasmic-facing; that stretch reads GIEGISRKMGGAKR. The helical transmembrane segment at 360-380 threads the bilayer; that stretch reads LWGAVNIILAVCLAMTVLVTK. At 381-403 the chain is on the extracellular side; it reads KAEEHRRIAGPMALPTDGIRAGA. The helical transmembrane segment at 404–424 threads the bilayer; the sequence is LTLFALLGIPLAITFSIPFAL. At 425-446 the chain is on the cytoplasmic side; it reads ASIISSSSGAGQGLSLGVLNMT. Residues 447 to 467 form a helical membrane-spanning segment; it reads IVIPQMVVSFGVGPIDALFGG. Residues 468–469 lie on the Extracellular side of the membrane; it reads GN. A helical transmembrane segment spans residues 470-490; the sequence is LPGFVVGAIAAAISSVVAFSV. The Cytoplasmic portion of the chain corresponds to 491–492; that stretch reads LP.

The protein belongs to the glycoside-pentoside-hexuronide (GPH) cation symporter transporter (TC 2.A.2.4) family.

It localises to the cell membrane. It functions in the pathway glycan biosynthesis; sucrose metabolism. May be responsible for the transport of glucosides into the cell, with the concomitant uptake of protons (symport system). Does not seem to transport sucrose. In Arabidopsis thaliana (Mouse-ear cress), this protein is Putative sucrose transport protein SUC6.